A 237-amino-acid chain; its full sequence is Uridylate kinase (237 aa).

Residue 13–16 (KLSG) participates in ATP binding. Glycine 53 provides a ligand contact to UMP. ATP contacts are provided by glycine 54 and arginine 58. Residues aspartate 73 and 134-141 (AGLPYFST) each bind UMP. ATP-binding residues include asparagine 162, tyrosine 168, and aspartate 171.

It belongs to the UMP kinase family. Homohexamer.

Its subcellular location is the cytoplasm. It carries out the reaction UMP + ATP = UDP + ADP. It participates in pyrimidine metabolism; CTP biosynthesis via de novo pathway; UDP from UMP (UMPK route): step 1/1. Its activity is regulated as follows. Inhibited by UTP. Its function is as follows. Catalyzes the reversible phosphorylation of UMP to UDP. The protein is Uridylate kinase of Leifsonia xyli subsp. xyli (strain CTCB07).